A 610-amino-acid polypeptide reads, in one-letter code: Glutamine--fructose-6-phosphate aminotransferase [isomerizing] (610 aa).

Cysteine 2 functions as the Nucleophile; for GATase activity in the catalytic mechanism. Residues 2–220 enclose the Glutamine amidotransferase type-2 domain; sequence CGIISAISKK…EGDIAILSHK (219 aa). SIS domains lie at 289–429 and 461–600; these read AHAL…LKTN and LAKE…IDKP. The active-site For Fru-6P isomerization activity is the lysine 605.

As to quaternary structure, homodimer.

The protein resides in the cytoplasm. The enzyme catalyses D-fructose 6-phosphate + L-glutamine = D-glucosamine 6-phosphate + L-glutamate. Functionally, catalyzes the first step in hexosamine metabolism, converting fructose-6P into glucosamine-6P using glutamine as a nitrogen source. The polypeptide is Glutamine--fructose-6-phosphate aminotransferase [isomerizing] (Buchnera aphidicola subsp. Baizongia pistaciae (strain Bp)).